The following is a 98-amino-acid chain: NADH-ubiquinone oxidoreductase chain 4L (98 aa).

A run of 3 helical transmembrane segments spans residues 2–22 (PSIF…TLVF), 29–49 (SLLC…LIIL), and 61–81 (ILLL…LVMV).

Belongs to the complex I subunit 4L family. As to quaternary structure, core subunit of respiratory chain NADH dehydrogenase (Complex I) which is composed of 45 different subunits.

It is found in the mitochondrion inner membrane. It carries out the reaction a ubiquinone + NADH + 5 H(+)(in) = a ubiquinol + NAD(+) + 4 H(+)(out). In terms of biological role, core subunit of the mitochondrial membrane respiratory chain NADH dehydrogenase (Complex I) which catalyzes electron transfer from NADH through the respiratory chain, using ubiquinone as an electron acceptor. Part of the enzyme membrane arm which is embedded in the lipid bilayer and involved in proton translocation. The polypeptide is NADH-ubiquinone oxidoreductase chain 4L (MT-ND4L) (Avahi laniger (Eastern woolly lemur)).